Reading from the N-terminus, the 283-residue chain is Protein MGARP (283 aa).

The interval 1–36 is disordered; the sequence is MYLRRAVSKTLALPRRAPPGPAPLGKDASLRRMSSR. Residues 1–41 lie on the Cytoplasmic side of the membrane; sequence MYLRRAVSKTLALPRRAPPGPAPLGKDASLRRMSSRKFPGT. A helical; Anchor for type IV membrane protein transmembrane segment spans residues 42–64; that stretch reads SGSNMIYYLVVGVTVSAGGYYTY. Residues 65 to 283 lie on the Mitochondrial intermembrane side of the membrane; that stretch reads KALTSKQVRR…VTEETASPQG (219 aa). Disordered stretches follow at residues 78–101 and 118–283; these read VAEP…EHVA and AESV…SPQG. Low complexity predominate over residues 128–160; that stretch reads EAAVVLPEESQASAPSEVPAEAAVVEASLSSSE. 2 stretches are compositionally biased toward polar residues: residues 171 to 184 and 199 to 220; these read VETT…TQEV and ADTS…QEGA. Residues 221 to 245 are compositionally biased toward basic and acidic residues; that stretch reads DTTKEEADNSKEAEGTTTEDPRSIS.

In terms of assembly, interacts with RHOT1/Miro-1, RHOT2/Miro-2, TRAK1/OIP106 and TRAK2/GRIF1. Expressed in the ovary, testis, brain, adrenal glands and the compartments of the visual nervous system. Expressed in corneal endothelium (CE) (at protein level). Expressed in steroidogenic tissues with the highest level of expression observed in the adrenal gland. Weakly expressed in placenta. Weakly expressed in astrocytes and neurons under normoxia. Strongly expressed in astrocytes and neurons under hypoxia. Expressed in each layer of the retina, with particularly higher staining in the inner segment of the photoreceptor (IS), the outer plexiform layer (OPL) and the ganglion cell layer (GCL).

The protein localises to the mitochondrion. It localises to the mitochondrion outer membrane. The protein resides in the mitochondrion inner membrane. Functionally, plays a role in the trafficking of mitochondria along microtubules. Regulates the kinesin-mediated axonal transport of mitochondria to nerve terminals along microtubules during hypoxia. Participates in the translocation of TRAK2/GRIF1 from the cytoplasm to the mitochondrion. Also plays a role in steroidogenesis through maintenance of mitochondrial abundance and morphology. Plays an inhibitory role during neocortex development by regulating mitochondrial morphology, distribution and motility in neocortical neurons. This Mus musculus (Mouse) protein is Protein MGARP (Mgarp).